Here is a 200-residue protein sequence, read N- to C-terminus: 3-isopropylmalate dehydratase small subunit (200 aa).

It belongs to the LeuD family. LeuD type 1 subfamily. As to quaternary structure, heterodimer of LeuC and LeuD.

It carries out the reaction (2R,3S)-3-isopropylmalate = (2S)-2-isopropylmalate. It functions in the pathway amino-acid biosynthesis; L-leucine biosynthesis; L-leucine from 3-methyl-2-oxobutanoate: step 2/4. Its function is as follows. Catalyzes the isomerization between 2-isopropylmalate and 3-isopropylmalate, via the formation of 2-isopropylmaleate. This chain is 3-isopropylmalate dehydratase small subunit, found in Pectobacterium carotovorum subsp. carotovorum (strain PC1).